Here is a 212-residue protein sequence, read N- to C-terminus: Thiamine-phosphate synthase (212 aa).

Residues 35 to 39 and Asn67 each bind 4-amino-2-methyl-5-(diphosphooxymethyl)pyrimidine; that span reads QLRRK. Mg(2+) is bound by residues Asp68 and Asp87. Ser106 is a binding site for 4-amino-2-methyl-5-(diphosphooxymethyl)pyrimidine. 132-134 lines the 2-[(2R,5Z)-2-carboxy-4-methylthiazol-5(2H)-ylidene]ethyl phosphate pocket; that stretch reads TGS. Residue Lys135 participates in 4-amino-2-methyl-5-(diphosphooxymethyl)pyrimidine binding. 2-[(2R,5Z)-2-carboxy-4-methylthiazol-5(2H)-ylidene]ethyl phosphate contacts are provided by residues Gly163 and 183-184; that span reads IS.

The protein belongs to the thiamine-phosphate synthase family. Mg(2+) is required as a cofactor.

The catalysed reaction is 2-[(2R,5Z)-2-carboxy-4-methylthiazol-5(2H)-ylidene]ethyl phosphate + 4-amino-2-methyl-5-(diphosphooxymethyl)pyrimidine + 2 H(+) = thiamine phosphate + CO2 + diphosphate. It catalyses the reaction 2-(2-carboxy-4-methylthiazol-5-yl)ethyl phosphate + 4-amino-2-methyl-5-(diphosphooxymethyl)pyrimidine + 2 H(+) = thiamine phosphate + CO2 + diphosphate. It carries out the reaction 4-methyl-5-(2-phosphooxyethyl)-thiazole + 4-amino-2-methyl-5-(diphosphooxymethyl)pyrimidine + H(+) = thiamine phosphate + diphosphate. Its pathway is cofactor biosynthesis; thiamine diphosphate biosynthesis; thiamine phosphate from 4-amino-2-methyl-5-diphosphomethylpyrimidine and 4-methyl-5-(2-phosphoethyl)-thiazole: step 1/1. In terms of biological role, condenses 4-methyl-5-(beta-hydroxyethyl)thiazole monophosphate (THZ-P) and 2-methyl-4-amino-5-hydroxymethyl pyrimidine pyrophosphate (HMP-PP) to form thiamine monophosphate (TMP). The protein is Thiamine-phosphate synthase of Chlorobium luteolum (strain DSM 273 / BCRC 81028 / 2530) (Pelodictyon luteolum).